Here is a 302-residue protein sequence, read N- to C-terminus: Ribosomal RNA small subunit methyltransferase H (302 aa).

Residues 43–45, aspartate 62, phenylalanine 89, aspartate 105, and histidine 112 each bind S-adenosyl-L-methionine; that span reads GGH. Residues 276 to 302 form a disordered region; that stretch reads EIANNPRSRSAKLRIAEKQAETGDEDN.

Belongs to the methyltransferase superfamily. RsmH family.

It is found in the cytoplasm. It catalyses the reaction cytidine(1402) in 16S rRNA + S-adenosyl-L-methionine = N(4)-methylcytidine(1402) in 16S rRNA + S-adenosyl-L-homocysteine + H(+). In terms of biological role, specifically methylates the N4 position of cytidine in position 1402 (C1402) of 16S rRNA. The chain is Ribosomal RNA small subunit methyltransferase H from Nostoc sp. (strain PCC 7120 / SAG 25.82 / UTEX 2576).